The following is a 245-amino-acid chain: 2,3-bisphosphoglycerate-dependent phosphoglycerate mutase (245 aa).

Residues 8-15 (RHGQSLWN), 21-22 (TG), Arg-60, 87-90 (ERHY), Lys-98, 114-115 (RR), and 183-184 (GN) each bind substrate. Catalysis depends on His-9, which acts as the Tele-phosphohistidine intermediate. Glu-87 serves as the catalytic Proton donor/acceptor.

The protein belongs to the phosphoglycerate mutase family. BPG-dependent PGAM subfamily.

The enzyme catalyses (2R)-2-phosphoglycerate = (2R)-3-phosphoglycerate. Its pathway is carbohydrate degradation; glycolysis; pyruvate from D-glyceraldehyde 3-phosphate: step 3/5. In terms of biological role, catalyzes the interconversion of 2-phosphoglycerate and 3-phosphoglycerate. The protein is 2,3-bisphosphoglycerate-dependent phosphoglycerate mutase of Bacillus anthracis (strain A0248).